A 115-amino-acid polypeptide reads, in one-letter code: Nitrogen regulatory protein P-II 2 (115 aa).

Tyr54 carries the post-translational modification O-UMP-tyrosine.

It belongs to the P(II) protein family.

Functionally, could be involved in the regulation of nitrogen fixation. This chain is Nitrogen regulatory protein P-II 2, found in Methanothermobacter thermautotrophicus (strain ATCC 29096 / DSM 1053 / JCM 10044 / NBRC 100330 / Delta H) (Methanobacterium thermoautotrophicum).